Reading from the N-terminus, the 341-residue chain is Aromatic amino acid aminotransferase (341 aa).

The residue at position 213 (K213) is an N6-(pyridoxal phosphate)lysine.

Belongs to the class-II pyridoxal-phosphate-dependent aminotransferase family. In terms of assembly, homodimer. Pyridoxal 5'-phosphate is required as a cofactor.

The catalysed reaction is an aromatic L-alpha-amino acid + 2-oxoglutarate = an aromatic oxo-acid + L-glutamate. Aminotransferase that catalyzes the conversion of aromatic amino acids and 2-oxoglutarate into corresponding aromatic oxo acids and L-glutamate. This is Aromatic amino acid aminotransferase from Corynebacterium glutamicum (strain R).